The primary structure comprises 547 residues: Chaperonin GroEL 1 (547 aa).

ATP contacts are provided by residues 29–32 (TLGP), 86–90 (DGTTT), G418, 482–484 (NAA), and D498.

This sequence belongs to the chaperonin (HSP60) family. Forms a cylinder of 14 subunits composed of two heptameric rings stacked back-to-back. Interacts with the co-chaperonin GroES.

It localises to the cytoplasm. The enzyme catalyses ATP + H2O + a folded polypeptide = ADP + phosphate + an unfolded polypeptide.. Its function is as follows. Together with its co-chaperonin GroES, plays an essential role in assisting protein folding. The GroEL-GroES system forms a nano-cage that allows encapsulation of the non-native substrate proteins and provides a physical environment optimized to promote and accelerate protein folding. This is Chaperonin GroEL 1 from Corynebacterium jeikeium (strain K411).